The following is a 127-amino-acid chain: Protein P6 (127 aa).

The protein resides in the virion membrane. The protein is Protein P6 (VI) of Pseudoalteromonas espejiana (Bacteriophage PM2).